Consider the following 228-residue polypeptide: L-ribulose-5-phosphate 4-epimerase UlaF (228 aa).

Residues Gly-26–Asn-27, Ser-43–Gly-44, and Ser-72–Ser-73 each bind substrate. Residues Asp-74, His-93, and His-95 each coordinate Zn(2+). Asp-118 functions as the Proton donor/acceptor in the catalytic mechanism. His-167 contacts Zn(2+). The active-site Proton donor/acceptor is the Tyr-225.

It belongs to the aldolase class II family. AraD/FucA subfamily. Zn(2+) is required as a cofactor.

The enzyme catalyses L-ribulose 5-phosphate = D-xylulose 5-phosphate. Its pathway is cofactor degradation; L-ascorbate degradation; D-xylulose 5-phosphate from L-ascorbate: step 4/4. Catalyzes the isomerization of L-ribulose 5-phosphate to D-xylulose 5-phosphate. Is involved in the anaerobic L-ascorbate utilization. This is L-ribulose-5-phosphate 4-epimerase UlaF from Escherichia coli (strain K12 / MC4100 / BW2952).